A 282-amino-acid polypeptide reads, in one-letter code: Pantothenate synthetase (282 aa).

M26–H33 contributes to the ATP binding site. H33 functions as the Proton donor in the catalytic mechanism. Q57 contacts (R)-pantoate. Q57 is a binding site for beta-alanine. Position 144 to 147 (G144 to D147) interacts with ATP. Residue Q150 coordinates (R)-pantoate. ATP is bound by residues I173 and L181–R184.

The protein belongs to the pantothenate synthetase family. As to quaternary structure, homodimer.

It is found in the cytoplasm. It carries out the reaction (R)-pantoate + beta-alanine + ATP = (R)-pantothenate + AMP + diphosphate + H(+). It participates in cofactor biosynthesis; (R)-pantothenate biosynthesis; (R)-pantothenate from (R)-pantoate and beta-alanine: step 1/1. Its function is as follows. Catalyzes the condensation of pantoate with beta-alanine in an ATP-dependent reaction via a pantoyl-adenylate intermediate. This is Pantothenate synthetase from Cupriavidus necator (strain ATCC 17699 / DSM 428 / KCTC 22496 / NCIMB 10442 / H16 / Stanier 337) (Ralstonia eutropha).